A 380-amino-acid chain; its full sequence is Chaperone protein DnaJ (380 aa).

Positions 5–70 constitute a J domain; that stretch reads DFYDVLGVNR…QKRAAYDQYG (66 aa). The segment at 139-217 adopts a CR-type zinc-finger fold; sequence GCEKQIRIPT…CHGAGRVKSQ (79 aa). Residues cysteine 152, cysteine 155, cysteine 169, cysteine 172, cysteine 191, cysteine 194, cysteine 205, and cysteine 208 each coordinate Zn(2+). 4 CXXCXGXG motif repeats span residues 152-159, 169-176, 191-198, and 205-212; these read CSHCHGSG, CPTCGGAG, CPTCHGSG, and CNICHGAG.

It belongs to the DnaJ family. Homodimer. Zn(2+) serves as cofactor.

It localises to the cytoplasm. Participates actively in the response to hyperosmotic and heat shock by preventing the aggregation of stress-denatured proteins and by disaggregating proteins, also in an autonomous, DnaK-independent fashion. Unfolded proteins bind initially to DnaJ; upon interaction with the DnaJ-bound protein, DnaK hydrolyzes its bound ATP, resulting in the formation of a stable complex. GrpE releases ADP from DnaK; ATP binding to DnaK triggers the release of the substrate protein, thus completing the reaction cycle. Several rounds of ATP-dependent interactions between DnaJ, DnaK and GrpE are required for fully efficient folding. Also involved, together with DnaK and GrpE, in the DNA replication of plasmids through activation of initiation proteins. The protein is Chaperone protein DnaJ of Laribacter hongkongensis (strain HLHK9).